A 464-amino-acid polypeptide reads, in one-letter code: Protein FAM90A3 (464 aa).

Disordered stretches follow at residues 1 to 42, 70 to 389, and 411 to 437; these read MMAR…DPRL, PATL…HDGA, and APSF…SEAP. 2 stretches are compositionally biased toward basic and acidic residues: residues 74–89 and 97–114; these read GKKE…KPRV and NKDK…DPQR. A compositionally biased stretch (low complexity) spans 180 to 197; the sequence is LASLSPLRKASLSSSSSL.

Belongs to the FAM90 family.

The chain is Protein FAM90A3 from Homo sapiens (Human).